A 362-amino-acid chain; its full sequence is Alkanal monooxygenase alpha chain (362 aa).

This sequence belongs to the bacterial luciferase oxidoreductase family. In terms of assembly, heterodimer of an alpha and a beta chain.

It catalyses the reaction a long-chain fatty aldehyde + FMNH2 + O2 = a long-chain fatty acid + hnu + FMN + H2O + 2 H(+). Light-emitting reaction in luminous bacteria. This Photorhabdus luminescens (Xenorhabdus luminescens) protein is Alkanal monooxygenase alpha chain (luxA).